The primary structure comprises 226 residues: UPF0173 metal-dependent hydrolase Fnod_0635 (226 aa).

This sequence belongs to the UPF0173 family.

The polypeptide is UPF0173 metal-dependent hydrolase Fnod_0635 (Fervidobacterium nodosum (strain ATCC 35602 / DSM 5306 / Rt17-B1)).